The sequence spans 447 residues: Elongation factor 1-alpha (447 aa).

A tr-type G domain is found at 5–230 (KFHINIVVIG…DQINDAKRPS (226 aa)). Positions 14-21 (GHVDSGKS) are G1. 14–21 (GHVDSGKS) provides a ligand contact to GTP. Lys55 is subject to N6,N6-dimethyllysine. Positions 70 to 74 (GITID) are G2. Lys79 carries the N6,N6,N6-trimethyllysine modification. The segment at 91 to 94 (DAPG) is G3. GTP-binding positions include 91–95 (DAPGH) and 153–156 (NKMD). The segment at 153-156 (NKMD) is G4. Lys187 carries the post-translational modification N6,N6,N6-trimethyllysine. Positions 194–196 (SGF) are G5. Lys261 is subject to N6-methyllysine. At Glu289 the chain carries 5-glutamyl glycerylphosphorylethanolamine. Residue Lys306 is modified to N6,N6,N6-trimethyllysine. Position 362 is a 5-glutamyl glycerylphosphorylethanolamine (Glu362). An N6,N6,N6-trimethyllysine modification is found at Lys396.

Belongs to the TRAFAC class translation factor GTPase superfamily. Classic translation factor GTPase family. EF-Tu/EF-1A subfamily. As to expression, was detected in all tissues examined but was most abundant in roots and salt-adapted cultured cells.

It localises to the cytoplasm. Its function is as follows. This protein promotes the GTP-dependent binding of aminoacyl-tRNA to the A-site of ribosomes during protein biosynthesis. The protein is Elongation factor 1-alpha of Nicotiana tabacum (Common tobacco).